The chain runs to 320 residues: tRNA N6-adenosine threonylcarbamoyltransferase (320 aa).

Fe cation-binding residues include H114 and H118. Residues 136-140, D169, G182, D186, and N273 each bind substrate; that span reads VVSGG. A Fe cation-binding site is contributed by D297.

It belongs to the KAE1 / TsaD family. Fe(2+) is required as a cofactor.

The protein localises to the cytoplasm. It catalyses the reaction L-threonylcarbamoyladenylate + adenosine(37) in tRNA = N(6)-L-threonylcarbamoyladenosine(37) in tRNA + AMP + H(+). Required for the formation of a threonylcarbamoyl group on adenosine at position 37 (t(6)A37) in tRNAs that read codons beginning with adenine. Is involved in the transfer of the threonylcarbamoyl moiety of threonylcarbamoyl-AMP (TC-AMP) to the N6 group of A37, together with TsaE and TsaB. TsaD likely plays a direct catalytic role in this reaction. The chain is tRNA N6-adenosine threonylcarbamoyltransferase from Ureaplasma parvum serovar 3 (strain ATCC 27815 / 27 / NCTC 11736).